Here is a 213-residue protein sequence, read N- to C-terminus: ATP phosphoribosyltransferase (213 aa).

The protein belongs to the ATP phosphoribosyltransferase family. Short subfamily. In terms of assembly, heteromultimer composed of HisG and HisZ subunits.

Its subcellular location is the cytoplasm. The enzyme catalyses 1-(5-phospho-beta-D-ribosyl)-ATP + diphosphate = 5-phospho-alpha-D-ribose 1-diphosphate + ATP. It functions in the pathway amino-acid biosynthesis; L-histidine biosynthesis; L-histidine from 5-phospho-alpha-D-ribose 1-diphosphate: step 1/9. Catalyzes the condensation of ATP and 5-phosphoribose 1-diphosphate to form N'-(5'-phosphoribosyl)-ATP (PR-ATP). Has a crucial role in the pathway because the rate of histidine biosynthesis seems to be controlled primarily by regulation of HisG enzymatic activity. In Bacillus licheniformis (strain ATCC 14580 / DSM 13 / JCM 2505 / CCUG 7422 / NBRC 12200 / NCIMB 9375 / NCTC 10341 / NRRL NRS-1264 / Gibson 46), this protein is ATP phosphoribosyltransferase.